A 107-amino-acid polypeptide reads, in one-letter code: Frataxin (107 aa).

The protein belongs to the frataxin family. As to quaternary structure, monomer.

It localises to the cytoplasm. Its function is as follows. Promotes the assembly and repair of iron-sulfur clusters by delivering Fe(2+) to proteins involved in these pathways. The chain is Frataxin (YFH1) from Trachipleistophora hominis (Microsporidian parasite).